We begin with the raw amino-acid sequence, 187 residues long: Orotate phosphoribosyltransferase (187 aa).

Residues arginine 103, lysine 104, lysine 107, and 129–137 each bind 5-phospho-alpha-D-ribose 1-diphosphate; that span reads EDVTTSGGS. Residues threonine 133 and arginine 161 each coordinate orotate.

It belongs to the purine/pyrimidine phosphoribosyltransferase family. PyrE subfamily. In terms of assembly, homodimer. It depends on Mg(2+) as a cofactor.

The catalysed reaction is orotidine 5'-phosphate + diphosphate = orotate + 5-phospho-alpha-D-ribose 1-diphosphate. It functions in the pathway pyrimidine metabolism; UMP biosynthesis via de novo pathway; UMP from orotate: step 1/2. Its function is as follows. Catalyzes the transfer of a ribosyl phosphate group from 5-phosphoribose 1-diphosphate to orotate, leading to the formation of orotidine monophosphate (OMP). In Methanosarcina acetivorans (strain ATCC 35395 / DSM 2834 / JCM 12185 / C2A), this protein is Orotate phosphoribosyltransferase.